The sequence spans 494 residues: MTATAPVKTEYEAVIGLETHVQLGTATKIFSNASTEFGADPNTHIDPVVLGLPGTLPVLNQKVLEYAVKAGLALNCQIAPYSKFDRKQYFYPDLPKNYQISQYDLPIAEHGWIEIEVAEKGKEPYTKKIGVTRLHMEEDAGKLVHAGSDRLAGSTHSLVDYNRAGVALAEIVSEPDLRTGKEAAEYAQELRRIMRYLGVSDGNMAEGSLRCDVNISIRPKGTEKFGTKVEIKNMNSFNAIQRAIEFEIERQIRCLETGEPIVQETRLWDEGKQVTKSMRSKEGSSDYRYFPEPDLGPIEVSETQRETWRSELPELPAQKRHRYAEQYGLSAYDARVLTDEKSTADYYEATVAAGADAKQAANWLMGDIAAYVNANKLLVSDLPLQPQDLAELVNLIEAGTISGKIAKEILPELLEKGGSPKAIVEAKGLTQISDPAQIEALVDELLAAHPTELEQFRAGKTKLQGFFVGQLMKKTGGRVDPKLSNQILNQKLKG.

This sequence belongs to the GatB/GatE family. GatB subfamily. Heterotrimer of A, B and C subunits.

The catalysed reaction is L-glutamyl-tRNA(Gln) + L-glutamine + ATP + H2O = L-glutaminyl-tRNA(Gln) + L-glutamate + ADP + phosphate + H(+). The enzyme catalyses L-aspartyl-tRNA(Asn) + L-glutamine + ATP + H2O = L-asparaginyl-tRNA(Asn) + L-glutamate + ADP + phosphate + 2 H(+). Functionally, allows the formation of correctly charged Asn-tRNA(Asn) or Gln-tRNA(Gln) through the transamidation of misacylated Asp-tRNA(Asn) or Glu-tRNA(Gln) in organisms which lack either or both of asparaginyl-tRNA or glutaminyl-tRNA synthetases. The reaction takes place in the presence of glutamine and ATP through an activated phospho-Asp-tRNA(Asn) or phospho-Glu-tRNA(Gln). This chain is Aspartyl/glutamyl-tRNA(Asn/Gln) amidotransferase subunit B, found in Synechococcus elongatus (strain ATCC 33912 / PCC 7942 / FACHB-805) (Anacystis nidulans R2).